The primary structure comprises 256 residues: Thiazole synthase (256 aa).

Lys95 functions as the Schiff-base intermediate with DXP in the catalytic mechanism. Residues Gly156, Ala182–Gly183, and Asn204–Thr205 each bind 1-deoxy-D-xylulose 5-phosphate.

It belongs to the ThiG family. Homotetramer. Forms heterodimers with either ThiH or ThiS.

The protein resides in the cytoplasm. It catalyses the reaction [ThiS sulfur-carrier protein]-C-terminal-Gly-aminoethanethioate + 2-iminoacetate + 1-deoxy-D-xylulose 5-phosphate = [ThiS sulfur-carrier protein]-C-terminal Gly-Gly + 2-[(2R,5Z)-2-carboxy-4-methylthiazol-5(2H)-ylidene]ethyl phosphate + 2 H2O + H(+). Its pathway is cofactor biosynthesis; thiamine diphosphate biosynthesis. Its function is as follows. Catalyzes the rearrangement of 1-deoxy-D-xylulose 5-phosphate (DXP) to produce the thiazole phosphate moiety of thiamine. Sulfur is provided by the thiocarboxylate moiety of the carrier protein ThiS. In vitro, sulfur can be provided by H(2)S. The chain is Thiazole synthase from Escherichia coli O157:H7.